The sequence spans 86 residues: Large ribosomal subunit protein bL27 (86 aa).

The disordered stretch occupies residues 1–22; sequence MAHKKAGGSTRNGRDSESKRLG.

This sequence belongs to the bacterial ribosomal protein bL27 family.

This chain is Large ribosomal subunit protein bL27, found in Vibrio cholerae serotype O1 (strain ATCC 39315 / El Tor Inaba N16961).